Here is a 783-residue protein sequence, read N- to C-terminus: Nuclear cap-binding protein subunit 1 (783 aa).

Residues 1-25 (MSRRRAHDTEDESYDHRRNKRRRVS) are disordered. T9 bears the Phosphothreonine mark. In terms of domain architecture, MIF4G spans 31–243 (EDRLESLILR…CLWAQIRKLR (213 aa)). Positions 652-683 (LSKADSSSSDTDEDTPHKRKKPITHADKPSEE) are disordered.

It belongs to the NCBP1 family. Component of the nuclear cap-binding complex (CBC), a heterodimer composed of Cbp80 and Cbp20 that interacts with m7GpppG-capped RNA.

It is found in the nucleus. Its function is as follows. Component of the cap-binding complex (CBC), which binds cotranscriptionally to the 5'-cap of pre-mRNAs and is involved in various processes such as pre-mRNA splicing and RNA-mediated gene silencing (RNAi). The CBC complex is involved in miRNA-mediated RNA interference via its interaction with Ars2 and is required for primary microRNAs (miRNAs) processing. Also involved in innate immunity via the short interfering RNAs (siRNAs) processing machinery by restricting the viral RNA production. In the CBC complex, Cbp80 does not bind directly capped RNAs (m7GpppG-capped RNA) but is required to stabilize the movement of the N-terminal loop of Cbp20 and lock the CBC into a high affinity cap-binding state with the cap structure. The protein is Nuclear cap-binding protein subunit 1 (Cbp80) of Drosophila virilis (Fruit fly).